A 250-amino-acid chain; its full sequence is Hydroxyacylglutathione hydrolase (250 aa).

Zn(2+)-binding residues include histidine 53, histidine 55, aspartate 57, histidine 58, histidine 110, aspartate 127, and histidine 165.

This sequence belongs to the metallo-beta-lactamase superfamily. Glyoxalase II family. In terms of assembly, monomer. Zn(2+) serves as cofactor.

The enzyme catalyses an S-(2-hydroxyacyl)glutathione + H2O = a 2-hydroxy carboxylate + glutathione + H(+). It functions in the pathway secondary metabolite metabolism; methylglyoxal degradation; (R)-lactate from methylglyoxal: step 2/2. In terms of biological role, thiolesterase that catalyzes the hydrolysis of S-D-lactoyl-glutathione to form glutathione and D-lactic acid. In Buchnera aphidicola subsp. Schizaphis graminum (strain Sg), this protein is Hydroxyacylglutathione hydrolase.